A 747-amino-acid chain; its full sequence is ATP-dependent DNA helicase Hel308 (747 aa).

ATP contacts are provided by residues Gln-29 and 47 to 54 (VPTASGKT). One can recognise a Helicase ATP-binding domain in the interval 34-200 (DAGVADGESL…WLDAELVDSS (167 aa)). Residues 145-148 (DEVH) carry the DEAH box motif. A Helicase C-terminal domain is found at 234 to 434 (PTEAVVRETL…REPSMRTHLL (201 aa)). A disordered region spans residues 711–747 (AAGHQQPEMDGVTPDADVKESAAAAGTDDGQANLGDF).

It belongs to the helicase family. Hel308 subfamily. Monomer.

The enzyme catalyses Couples ATP hydrolysis with the unwinding of duplex DNA by translocating in the 3'-5' direction.. It carries out the reaction ATP + H2O = ADP + phosphate + H(+). Functionally, DNA-dependent ATPase and 3'-5' DNA helicase that may be involved in repair of stalled replication forks. This is ATP-dependent DNA helicase Hel308 from Natronomonas pharaonis (strain ATCC 35678 / DSM 2160 / CIP 103997 / JCM 8858 / NBRC 14720 / NCIMB 2260 / Gabara) (Halobacterium pharaonis).